We begin with the raw amino-acid sequence, 144 residues long: Large ribosomal subunit protein uL11 (144 aa).

It belongs to the universal ribosomal protein uL11 family. As to quaternary structure, part of the ribosomal stalk of the 50S ribosomal subunit. Interacts with L10 and the large rRNA to form the base of the stalk. L10 forms an elongated spine to which L12 dimers bind in a sequential fashion forming a multimeric L10(L12)X complex. Post-translationally, one or more lysine residues are methylated.

In terms of biological role, forms part of the ribosomal stalk which helps the ribosome interact with GTP-bound translation factors. The protein is Large ribosomal subunit protein uL11 of Acidiphilium cryptum (strain JF-5).